We begin with the raw amino-acid sequence, 146 residues long: Holo-[acyl-carrier-protein] synthase (146 aa).

The Mg(2+) site is built by Asp9 and Glu63.

This sequence belongs to the P-Pant transferase superfamily. AcpS family. It depends on Mg(2+) as a cofactor.

It localises to the cytoplasm. The catalysed reaction is apo-[ACP] + CoA = holo-[ACP] + adenosine 3',5'-bisphosphate + H(+). Functionally, transfers the 4'-phosphopantetheine moiety from coenzyme A to a Ser of acyl-carrier-protein. This is Holo-[acyl-carrier-protein] synthase from Burkholderia orbicola (strain MC0-3).